The sequence spans 126 residues: MAIIGLGTDIADIERVDKVFARSGDAFAERILAPSELVIYHSLKLKARYLAKRFAVKEAASKALGTGIACGVSFQDFIVSNDERGKPLLSLSGKAAELAESMGVKHVHLTLADEKRYAVATVILES.

Mg(2+) contacts are provided by aspartate 9 and glutamate 58.

Belongs to the P-Pant transferase superfamily. AcpS family. Requires Mg(2+) as cofactor.

The protein localises to the cytoplasm. It carries out the reaction apo-[ACP] + CoA = holo-[ACP] + adenosine 3',5'-bisphosphate + H(+). In terms of biological role, transfers the 4'-phosphopantetheine moiety from coenzyme A to a Ser of acyl-carrier-protein. The polypeptide is Holo-[acyl-carrier-protein] synthase (Photobacterium profundum (strain SS9)).